A 119-amino-acid polypeptide reads, in one-letter code: Phosphoribosyl-AMP cyclohydrolase (119 aa).

Residue Asp71 participates in Mg(2+) binding. Zn(2+) is bound at residue Cys72. Mg(2+)-binding residues include Asp73 and Asp75. Residues Cys90 and Cys97 each coordinate Zn(2+).

It belongs to the PRA-CH family. In terms of assembly, homodimer. The cofactor is Mg(2+). Zn(2+) is required as a cofactor.

The protein resides in the cytoplasm. It carries out the reaction 1-(5-phospho-beta-D-ribosyl)-5'-AMP + H2O = 1-(5-phospho-beta-D-ribosyl)-5-[(5-phospho-beta-D-ribosylamino)methylideneamino]imidazole-4-carboxamide. Its pathway is amino-acid biosynthesis; L-histidine biosynthesis; L-histidine from 5-phospho-alpha-D-ribose 1-diphosphate: step 3/9. Functionally, catalyzes the hydrolysis of the adenine ring of phosphoribosyl-AMP. The chain is Phosphoribosyl-AMP cyclohydrolase from Brucella abortus (strain 2308).